The following is a 306-amino-acid chain: MASPGCLWLLAVALLPWTCASRALQHLDPPAPLPLVIWHGMGDSCCNPLSMGAIKKMVEKKIPGIYVLSLEIGKTLMEDVENSFFLNVNSQVTTVCQALAKDPKLQQGYNAMGFSQGGQFLRAVAQRCPSPPMINLISVGGQHQGVFGLPRCPGESSHICDFIRKTLNAGAYSKVVQERLVQAEYWHDPIKEDVYRNHSIFLADINQERGINESYKKNLMALKKFVMVKFLNDSIVDPVDSEWFGFYRSGQAKETIPLQETSLYTQDRLGLKEMDNAGQLVFLATEGDHLQLSEEWFYAHIIPFLG.

An N-terminal signal peptide occupies residues Met1–Leu27. The S-palmitoyl cysteine; by ZDHHC3 and ZDHHC7 moiety is linked to residue Cys6. 3 disulfides stabilise this stretch: Cys45-Cys46, Cys96-Cys128, and Cys152-Cys160. Ser115 is an active-site residue. 3 N-linked (GlcNAc...) asparagine glycosylation sites follow: Asn197, Asn212, and Asn232. Catalysis depends on residues Asp233 and His289.

This sequence belongs to the palmitoyl-protein thioesterase family. In terms of assembly, interacts with CLN5. Interacts with ATP5F1A and ATP5F1B. Post-translationally, glycosylated.

Its subcellular location is the lysosome. The protein localises to the secreted. The protein resides in the golgi apparatus. It localises to the endoplasmic reticulum. The catalysed reaction is S-hexadecanoyl-L-cysteinyl-[protein] + H2O = L-cysteinyl-[protein] + hexadecanoate + H(+). The enzyme catalyses hexadecanoyl-CoA + H2O = hexadecanoate + CoA + H(+). It catalyses the reaction S-hexadecanoyl-N-acetylcysteamine + H2O = N-acetylcysteamine + hexadecanoate + H(+). It carries out the reaction S-hexadecanoyl-N-acetylcysteine methyl ester + H2O = N-acetylcysteine methyl ester + hexadecanoate + H(+). With respect to regulation, palmitoylation reduces PPT1 enzymatic activity. In terms of biological role, has thioesterase activity against fatty acid thioesters with 14 -18 carbons, including palmitoyl-CoA, S-palmitoyl-N-acetylcysteamine, and palmitoylated proteins. In contrast to PPT2, PPT1 can hydrolyze palmitoylated proteins and palmitoylcysteine. The chain is Palmitoyl-protein thioesterase 1 (PPT1) from Homo sapiens (Human).